Reading from the N-terminus, the 384-residue chain is Flap endonuclease 1 (384 aa).

The interval 1 to 108 (MGIHKLMDLL…GELARRQKAK (108 aa)) is N-domain. D34 contributes to the Mg(2+) binding site. R74 is a DNA binding site. The Mg(2+) site is built by D90, E162, E164, D183, and D185. Residues 126 to 254 (EALKQEQRNL…VNAFKLITEH (129 aa)) form an I-domain region. DNA is bound at residue E162. Residues G232 and D234 each coordinate DNA. D234 is a binding site for Mg(2+). Residues 340–384 (AKEHKGSQTRLNDFFKVQPKDTSSTSKASKKPTNTKSANKKGGKK) form a disordered region. An interaction with PCNA region spans residues 346–354 (SQTRLNDFF). Low complexity predominate over residues 359-376 (KDTSSTSKASKKPTNTKS).

It belongs to the XPG/RAD2 endonuclease family. FEN1 subfamily. As to quaternary structure, interacts with PCNA. Three molecules of FEN1 bind to one PCNA trimer with each molecule binding to one PCNA monomer. PCNA stimulates the nuclease activity without altering cleavage specificity. The cofactor is Mg(2+). Post-translationally, phosphorylated. Phosphorylation upon DNA damage induces relocalization to the nuclear plasma.

Its subcellular location is the nucleus. The protein resides in the nucleolus. The protein localises to the nucleoplasm. It is found in the mitochondrion. Functionally, structure-specific nuclease with 5'-flap endonuclease and 5'-3' exonuclease activities involved in DNA replication and repair. During DNA replication, cleaves the 5'-overhanging flap structure that is generated by displacement synthesis when DNA polymerase encounters the 5'-end of a downstream Okazaki fragment. It enters the flap from the 5'-end and then tracks to cleave the flap base, leaving a nick for ligation. Also involved in the long patch base excision repair (LP-BER) pathway, by cleaving within the apurinic/apyrimidinic (AP) site-terminated flap. Acts as a genome stabilization factor that prevents flaps from equilibrating into structures that lead to duplications and deletions. Also possesses 5'-3' exonuclease activity on nicked or gapped double-stranded DNA, and exhibits RNase H activity. Also involved in replication and repair of rDNA and in repairing mitochondrial DNA. The chain is Flap endonuclease 1 from Tetrahymena thermophila (strain SB210).